A 124-amino-acid polypeptide reads, in one-letter code: Large ribosomal subunit protein bL21 (124 aa).

This sequence belongs to the bacterial ribosomal protein bL21 family. In terms of assembly, part of the 50S ribosomal subunit. Contacts protein L20.

Its function is as follows. This protein binds to 23S rRNA in the presence of protein L20. The protein is Large ribosomal subunit protein bL21 of Synechocystis sp. (strain ATCC 27184 / PCC 6803 / Kazusa).